The primary structure comprises 420 residues: O-methyltransferase penK (420 aa).

Asp-285 lines the S-adenosyl-L-methionine pocket. The active-site Proton acceptor is His-325.

It belongs to the class I-like SAM-binding methyltransferase superfamily. Cation-independent O-methyltransferase family.

It participates in secondary metabolite biosynthesis. Its pathway is alkaloid biosynthesis. The protein operates within mycotoxin biosynthesis. Functionally, O-methyltransferase; part of the gene cluster that mediates the biosynthesis of penigequinolones, potent insecticidal alkaloids that contain a highly modified 10-carbon prenyl group. The first stage is catalyzed by the nonribosomal peptide synthetase penN that condenses anthranilic acid and O-methyl-L-tyrosine to produce 4'-methoxycyclopeptin. 4'-methoxycyclopeptin is then converted to 4'-methoxydehydrocyclopeptin by the ketoglutarate-dependent dioxygenase penM through dehydrogenation to form a double bond between C-alpha and C-beta of the O-methyltyrosine side chain. PenM also converts its first product methoxydehydrocyclopeptin to 4'-methoxycyclopenin. The following conversion of 4'methoxycyclopenin into 4'-methoxyviridicatin is catalyzed by the cyclopenase penL. 4'-methoxyviridicatin is the precursor of quinolone natural products, and is further converted to quinolinone B. The prenyltransferase penI then catalyzes the canonical Friedel-Crafts alkylation of quinolinone B with dimethylallyl cation to yield dimethylallyl quinolone, which is subjected to FAD-dependent dehydrogenation by the FAD-linked oxidoreductase penH to yield conjugated aryl diene. The delta(3') double bond then serves as the site of the second alkylation with DMAPP catalyzed by the prenyltransferase penG to yield a carbenium ion intermediate, which can be attacked by H(2)O to yield a styrenyl quinolone containing a C3'-hydroxyprenyl chain, or undergo cyclization to yield yaequinolones J1 and J2. The conversion of the styrenyl quinolone into the tetrahydrofuran-containing yaequinolone C is performed by the FAD-dependent monooxygenase penE and involves epoxidation of the terminal C7'-C8' olefin, followed by epoxide ring opening initiated by the C3' hydroxyl group. The predicted cysteine hydrolase penJ acts as an epoxide hydrolase that enhances the rate of the 5-exo-tet cyclization step, increasing the yield of yaequinolone C. PenF catalyzes the cationic rearrangement of the epoxide formed by penE (before ring opening to produce yaequinolone C) into yaequinolone D. Finally, the short-chain dehydrogenase/reductase (SDR)-like reductase penD, catalyzes both the dehydration of yaequinolone D and the reduction of the resulting oxonium to yield penigequinolone. In Penicillium thymicola, this protein is O-methyltransferase penK.